Reading from the N-terminus, the 575-residue chain is Preprotein translocase subunit SCY2, chloroplastic (575 aa).

Residues methionine 1–cysteine 34 constitute a chloroplast transit peptide. Helical transmembrane passes span phenylalanine 157 to phenylalanine 177, leucine 206 to leucine 226, isoleucine 251 to leucine 271, valine 285 to threonine 305, isoleucine 306 to glycine 326, leucine 346 to valine 366, threonine 414 to leucine 434, glycine 447 to phenylalanine 467, phenylalanine 509 to leucine 529, and serine 531 to isoleucine 551.

Belongs to the SecY/SEC61-alpha family. As to quaternary structure, part of a second Sec protein translocation apparatus. Interacts probably with SECA2. As to expression, ubiquitous.

Its subcellular location is the plastid. The protein resides in the chloroplast membrane. The protein localises to the amyloplast membrane. It is found in the chloroplast thylakoid membrane. In terms of biological role, involved in protein export. Probably interacts with other proteins to allow the postimport or conservative sorting pathway for inner membrane proteins in plastids. Central subunit of the protein translocation channel SecYE. Consists of two halves formed by TMs 1-5 and 6-10. These two domains form a lateral gate at the front which open onto the bilayer between TMs 2 and 7, and are clamped together by SecE at the back. The channel is closed by both a pore ring composed of hydrophobic SecY resides and a short helix (helix 2A) on the extracellular side of the membrane which forms a plug. The polypeptide is Preprotein translocase subunit SCY2, chloroplastic (SCY2) (Arabidopsis thaliana (Mouse-ear cress)).